A 401-amino-acid polypeptide reads, in one-letter code: Chalcone synthase 6 (401 aa).

The active site involves cysteine 168.

This sequence belongs to the thiolase-like superfamily. Chalcone/stilbene synthases family.

The catalysed reaction is (E)-4-coumaroyl-CoA + 3 malonyl-CoA + 3 H(+) = 2',4,4',6'-tetrahydroxychalcone + 3 CO2 + 4 CoA. Its pathway is secondary metabolite biosynthesis; flavonoid biosynthesis. In terms of biological role, the primary product of this enzyme is 4,2',4',6'-tetrahydroxychalcone (also termed naringenin-chalcone or chalcone) which can under specific conditions spontaneously isomerize into naringenin. This chain is Chalcone synthase 6 (CHS6), found in Sorghum bicolor (Sorghum).